The chain runs to 202 residues: Secreted RxLR effector protein 11 (202 aa).

The first 23 residues, 1 to 23, serve as a signal peptide directing secretion; sequence MRLNFTKLFAGAVALAWTTESMA. A RxLR-dEER motif is present at residues 49–61; it reads RRLRTINGADEER.

The protein belongs to the RxLR effector family.

It is found in the secreted. It localises to the host cytoplasm. Its subcellular location is the host nucleus. Effector that acts as a broad suppressor of cell death to interrupt plant immunity. Inhibits cell death induced by cell death-inducing proteins, including the PAMP elicitor INF1 from P.infestans. This is Secreted RxLR effector protein 11 from Plasmopara viticola (Downy mildew of grapevine).